A 338-amino-acid polypeptide reads, in one-letter code: Ketol-acid reductoisomerase (NADP(+)) (338 aa).

The region spanning M1–T181 is the KARI N-terminal Rossmann domain. Residues Y24–Q27, R47, and S52 each bind NADP(+). H107 is a catalytic residue. G133 lines the NADP(+) pocket. The KARI C-terminal knotted domain maps to T182–I327. Positions 190, 194, 226, and 230 each coordinate Mg(2+). S251 contributes to the substrate binding site.

It belongs to the ketol-acid reductoisomerase family. Mg(2+) serves as cofactor.

The catalysed reaction is (2R)-2,3-dihydroxy-3-methylbutanoate + NADP(+) = (2S)-2-acetolactate + NADPH + H(+). It carries out the reaction (2R,3R)-2,3-dihydroxy-3-methylpentanoate + NADP(+) = (S)-2-ethyl-2-hydroxy-3-oxobutanoate + NADPH + H(+). Its pathway is amino-acid biosynthesis; L-isoleucine biosynthesis; L-isoleucine from 2-oxobutanoate: step 2/4. The protein operates within amino-acid biosynthesis; L-valine biosynthesis; L-valine from pyruvate: step 2/4. Involved in the biosynthesis of branched-chain amino acids (BCAA). Catalyzes an alkyl-migration followed by a ketol-acid reduction of (S)-2-acetolactate (S2AL) to yield (R)-2,3-dihydroxy-isovalerate. In the isomerase reaction, S2AL is rearranged via a Mg-dependent methyl migration to produce 3-hydroxy-3-methyl-2-ketobutyrate (HMKB). In the reductase reaction, this 2-ketoacid undergoes a metal-dependent reduction by NADPH to yield (R)-2,3-dihydroxy-isovalerate. This Albidiferax ferrireducens (strain ATCC BAA-621 / DSM 15236 / T118) (Rhodoferax ferrireducens) protein is Ketol-acid reductoisomerase (NADP(+)).